Reading from the N-terminus, the 247-residue chain is ATP synthase subunit a, chloroplastic (247 aa).

Transmembrane regions (helical) follow at residues 38–58 (QVLITSWVVIVILLGSAIVTV), 95–115 (VPFIGTLFLFIFVSNWSGALL), 134–154 (INTTVALALLTSIAYFYAGLS), 199–219 (LVVVVLVSLVPSVVPIPVMFL), and 220–240 (GLFTSGIQALIFATLAAAYIG).

It belongs to the ATPase A chain family. F-type ATPases have 2 components, CF(1) - the catalytic core - and CF(0) - the membrane proton channel. CF(1) has five subunits: alpha(3), beta(3), gamma(1), delta(1), epsilon(1). CF(0) has four main subunits: a, b, b' and c.

The protein localises to the plastid. Its subcellular location is the chloroplast thylakoid membrane. Functionally, key component of the proton channel; it plays a direct role in the translocation of protons across the membrane. The polypeptide is ATP synthase subunit a, chloroplastic (Populus alba (White poplar)).